A 157-amino-acid chain; its full sequence is uncharacterized protein (157 aa).

The N-acetyltransferase domain maps to 9–146 (LLINYKTLDE…GDFYVWHPET (138 aa)).

This is an uncharacterized protein from Bacillus anthracis (strain CDC 684 / NRRL 3495).